Reading from the N-terminus, the 248-residue chain is Mannose-binding protein C (248 aa).

Positions 1–20 (MSLFPSLTLLLLSVVATSYS) are cleaved as a signal peptide. Residues 42-99 (GINGFPGKDGRDGTKGEKGEPGQGLRGLQGPPGKLGPPGNPGSSGSPGPKGQKGDPGE) enclose the Collagen-like domain. Residues 43-113 (INGFPGKDGR…DSSLAASERK (71 aa)) form a disordered region. 4-hydroxyproline is present on Pro-47. Positions 49–61 (KDGRDGTKGEKGE) are enriched in basic and acidic residues. Pro-73, Pro-79, Pro-82, and Pro-88 each carry 4-hydroxyproline. Over residues 82 to 91 (PGSSGSPGPK) the composition is skewed to low complexity. The stretch at 112–130 (RKALQTEMARIKKWLTFSL) forms a coiled coil. One can recognise a C-type lectin domain in the interval 134 to 245 (VGNKFFLTNG…CSSSHLALCE (112 aa)). 2 cysteine pairs are disulfide-bonded: Cys-155–Cys-244 and Cys-222–Cys-236.

In terms of assembly, oligomeric complex of 3 or more homotrimers. Interacts with MASP1 and MASP2. Interacts with MEP1A and MEP1B and may inhibit their catalytic activity. Post-translationally, hydroxylation on proline residues within the sequence motif, GXPG, is most likely to be 4-hydroxy as this fits the requirement for 4-hydroxylation in vertebrates.

The protein localises to the secreted. Functionally, calcium-dependent lectin involved in innate immune defense. Binds mannose, fucose and N-acetylglucosamine on different microorganisms and activates the lectin complement pathway. Binds to late apoptotic cells, as well as to apoptotic blebs and to necrotic cells, but not to early apoptotic cells, facilitating their uptake by macrophages. In Chlorocebus aethiops (Green monkey), this protein is Mannose-binding protein C (MBL2).